The chain runs to 447 residues: MIKIRRGLDLPITGSPRQSIEDGPAIRSVALIGFDYHGMKPTMNVQVGDKVKLGQVLFTDKKTVGVKYTSPAAGTVSAINRGERRVLQSVVIDIEGDEAESFKTFSEAEIASADRQALVDNLVDSGLWTALRTRPYSKVPQLDSVPNSIFVTAMDTNPLAADPQLVIGEKSAAFALGLAVLAKLTEGKVFVCHADGASVPTSAAANVEAKAFSGVHPAGNAGTHIHFLDPVSANKTVWTIGYQDVIAYGELFTSGKLPVDRVVSLAGPQVTDPRVVRTRLGASLQELTAGQLKDGENRIISGSVFSGRKTSSPTAYLGRFHNQVSVLLEGRDRPFLHYLVAGANRFSVMPIYLSKLFGGKKFDFTTSTLGSERAMVPVGAYEKVMPLDILPTQLLRSIIVGDTEAAQQLGCLELDEEDLALCSFVCPGKYEYGPILRDNLTRIEKEG.

This sequence belongs to the NqrA family. Composed of six subunits; NqrA, NqrB, NqrC, NqrD, NqrE and NqrF.

It carries out the reaction a ubiquinone + n Na(+)(in) + NADH + H(+) = a ubiquinol + n Na(+)(out) + NAD(+). NQR complex catalyzes the reduction of ubiquinone-1 to ubiquinol by two successive reactions, coupled with the transport of Na(+) ions from the cytoplasm to the periplasm. NqrA to NqrE are probably involved in the second step, the conversion of ubisemiquinone to ubiquinol. The chain is Na(+)-translocating NADH-quinone reductase subunit A from Saccharophagus degradans (strain 2-40 / ATCC 43961 / DSM 17024).